Here is a 396-residue protein sequence, read N- to C-terminus: Ornithine aminotransferase 2 (396 aa).

The residue at position 255 (lysine 255) is an N6-(pyridoxal phosphate)lysine.

It belongs to the class-III pyridoxal-phosphate-dependent aminotransferase family. OAT subfamily. The cofactor is pyridoxal 5'-phosphate.

The protein resides in the cytoplasm. The enzyme catalyses a 2-oxocarboxylate + L-ornithine = L-glutamate 5-semialdehyde + an L-alpha-amino acid. The protein operates within amino-acid biosynthesis; L-proline biosynthesis; L-glutamate 5-semialdehyde from L-ornithine: step 1/1. Functionally, catalyzes the interconversion of ornithine to glutamate semialdehyde. The chain is Ornithine aminotransferase 2 from Staphylococcus aureus (strain MRSA252).